The sequence spans 90 residues: Putative defensin-like protein 243 (90 aa).

The signal sequence occupies residues 1–19 (MKVEVIFLASCVLFSLIHA). 4 cysteine pairs are disulfide-bonded: C33–C88, C43–C72, C53–C82, and C70–C84.

It belongs to the DEFL family.

It localises to the secreted. The chain is Putative defensin-like protein 243 (SCRL9) from Arabidopsis thaliana (Mouse-ear cress).